Reading from the N-terminus, the 902-residue chain is HTH-type transcriptional regulator MalT (902 aa).

Residue 39-46 participates in ATP binding; that stretch reads SPAGYGKT. The HTH luxR-type domain occupies 830–895; sequence ELIRTSPLTQ…DAVQHAQQLL (66 aa). The H-T-H motif DNA-binding region spans 854 to 873; it reads NEQIAGELAVAATTIKTHIR.

This sequence belongs to the MalT family. As to quaternary structure, monomer in solution. Oligomerizes to an active state in the presence of the positive effectors ATP and maltotriose.

Its activity is regulated as follows. Activated by ATP and maltotriose, which are both required for DNA binding. Its function is as follows. Positively regulates the transcription of the maltose regulon whose gene products are responsible for uptake and catabolism of malto-oligosaccharides. Specifically binds to the promoter region of its target genes, recognizing a short DNA motif called the MalT box. This is HTH-type transcriptional regulator MalT from Salmonella dublin (strain CT_02021853).